A 917-amino-acid chain; its full sequence is Hexokinase-2 (917 aa).

An N-acetylmethionine modification is found at Met-1. The interval 1–16 (MIASHMIACLFTELNQ) is mitochondrial-binding peptide (MBP). Hexokinase domains follow at residues 16–458 (QNQV…MVTA) and 464–906 (ADQH…LITA). ATP-binding positions include Arg-30 and 84–89 (DLGGTN). Residues 73-207 (DGTEHGEFLA…DFDIDIVAVV (135 aa)) are hexokinase small subdomain 1. 84–88 (DLGGT) lines the D-glucose 6-phosphate pocket. Residues 155–156 (SF), 172–173 (TK), and 208–209 (ND) contribute to the D-glucose site. The hexokinase large subdomain 1 stretch occupies residues 208–447 (NDTVGTMMTC…CDVRFLRSED (240 aa)). The D-glucose 6-phosphate site is built by Asp-209 and Thr-232. Residues Asn-235, Glu-260, and 291–294 (QLFE) contribute to the D-glucose site. D-glucose 6-phosphate is bound at residue 413 to 415 (DGS). 425 to 426 (KR) is an ATP binding site. Residues Ser-449 and 532-536 (DLGGT) contribute to the D-glucose 6-phosphate site. Residues 521-655 (DGTEKGDFLA…EFDLDVVAVV (135 aa)) are hexokinase small subdomain 2. 532-537 (DLGGTN) contributes to the ATP binding site. Residues 603–604 (SF), 620–621 (TK), and 656–657 (ND) each bind D-glucose. The segment at 656–895 (NDTVGTMMTC…CDVSFLESED (240 aa)) is hexokinase large subdomain 2. Asp-657 and Thr-680 together coordinate D-glucose 6-phosphate. Thr-680 serves as a coordination point for ATP. Residues 682 to 683 (SN), Glu-708, and 739 to 742 (QRFE) each bind D-glucose. Residues 747-748 (GM), 784-788 (TKFLS), and 863-867 (TLYKL) each bind ATP. D-glucose 6-phosphate contacts are provided by residues 861 to 863 (DGT) and Ser-897.

This sequence belongs to the hexokinase family. As to quaternary structure, monomer. Interacts with TIGAR; the interaction increases hexokinase activity in a hypoxia- and HIF1A-dependent manner.

It is found in the mitochondrion outer membrane. The protein resides in the cytoplasm. The protein localises to the cytosol. The enzyme catalyses a D-hexose + ATP = a D-hexose 6-phosphate + ADP + H(+). The catalysed reaction is D-fructose + ATP = D-fructose 6-phosphate + ADP + H(+). It carries out the reaction D-glucose + ATP = D-glucose 6-phosphate + ADP + H(+). It functions in the pathway carbohydrate metabolism; hexose metabolism. The protein operates within carbohydrate degradation; glycolysis; D-glyceraldehyde 3-phosphate and glycerone phosphate from D-glucose: step 1/4. With respect to regulation, hexokinase activity is specifically inhibited by 2,6-disubstituted glucosamines. Its function is as follows. Catalyzes the phosphorylation of hexose, such as D-glucose and D-fructose, to hexose 6-phosphate (D-glucose 6-phosphate and D-fructose 6-phosphate, respectively). Mediates the initial step of glycolysis by catalyzing phosphorylation of D-glucose to D-glucose 6-phosphate. Plays a key role in maintaining the integrity of the outer mitochondrial membrane by preventing the release of apoptogenic molecules from the intermembrane space and subsequent apoptosis. This chain is Hexokinase-2, found in Rattus norvegicus (Rat).